The chain runs to 375 residues: MTGNTAPSQADARRTVISVDAMGGDAGPAVVVAGIAKSASKNPDIGFLLHGPAEELEPLVARRKTLKGRVEIRDARDVVTMEDKPSQVMRNGKGTSMWSALESVRSGEADGVVSCGNTGALMALSMLRLRKLPGVNRPAIAILWPSRNPQGFNVMLDVGADVRADAEDLLQYALMGTSYIRNSMDLPCPRVGLLNVGTEEHKGRAELKEAYALISQNAEKANFEFVGFVEGSDIPGDIADVIVTDGFTGNVAIKTGEGTASLLRSAIREAFEYSILSRLAALLAYTSLSRLAKRIDPRRVNGGVFLGLNGTVVKSHGGADATGVSAAVKLAFLLAEQGFAEKLAARVASAVELAQDDATSADADAPGDSETGSTN.

The tract at residues 354 to 375 (AQDDATSADADAPGDSETGSTN) is disordered. The span at 356 to 368 (DDATSADADAPGD) shows a compositional bias: low complexity.

This sequence belongs to the PlsX family. As to quaternary structure, homodimer. Probably interacts with PlsY.

The protein localises to the cytoplasm. It carries out the reaction a fatty acyl-[ACP] + phosphate = an acyl phosphate + holo-[ACP]. The protein operates within lipid metabolism; phospholipid metabolism. Its function is as follows. Catalyzes the reversible formation of acyl-phosphate (acyl-PO(4)) from acyl-[acyl-carrier-protein] (acyl-ACP). This enzyme utilizes acyl-ACP as fatty acyl donor, but not acyl-CoA. This chain is Phosphate acyltransferase, found in Ruegeria sp. (strain TM1040) (Silicibacter sp.).